A 122-amino-acid chain; its full sequence is Large ribosomal subunit protein uL18 (122 aa).

The protein belongs to the universal ribosomal protein uL18 family. As to quaternary structure, part of the 50S ribosomal subunit; part of the 5S rRNA/L5/L18/L25 subcomplex. Contacts the 5S and 23S rRNAs.

Functionally, this is one of the proteins that bind and probably mediate the attachment of the 5S RNA into the large ribosomal subunit, where it forms part of the central protuberance. This Prochlorococcus marinus (strain MIT 9215) protein is Large ribosomal subunit protein uL18.